Consider the following 177-residue polypeptide: Late embryogenesis abundant protein 1 (177 aa).

The segment at 1–177 (MASHDQSYKA…DKDHFPTNRH (177 aa)) is disordered. A compositionally biased stretch (basic and acidic residues) spans 28–39 (IEDKAQAAKEKA). Over residues 40–89 (QQAAQTAKDKTSQTAQAAKEKTQQTAQAAKEKTQQTAQAAKDETQQTAQA) the composition is skewed to low complexity. Tandem repeats lie at residues 53 to 63 (TAQAAKEKTQQ), 64 to 74 (TAQAAKEKTQQ), 75 to 85 (TAQAAKDETQQ), and 86 to 96 (TAQAAKDKTQQ). Residues 53-96 (TAQAAKEKTQQTAQAAKEKTQQTAQAAKDETQQTAQAAKDKTQQ) are 4 X 11 AA approximate tandem repeats of T-A-Q-A-A-K-E-K-T-Q-Q. Positions 90–117 (AKDKTQQTTEATKEKAQDTTGRAREKGS) are enriched in basic and acidic residues. Residues 119–142 (MGQSTKETAQSGKDNSAGFLQQTG) show a composition bias toward polar residues. Residues 164-177 (NDDKDKDHFPTNRH) are compositionally biased toward basic and acidic residues.

The protein belongs to the LEA type 4 family. As to expression, highest expression is found in seeds. No expression detected in adult tissues.

This chain is Late embryogenesis abundant protein 1, found in Cicer arietinum (Chickpea).